Consider the following 264-residue polypeptide: 5'-nucleotidase SurE (264 aa).

4 residues coordinate a divalent metal cation: Asp-10, Asp-11, Ser-43, and Asn-99.

It belongs to the SurE nucleotidase family. A divalent metal cation is required as a cofactor.

The protein resides in the cytoplasm. It carries out the reaction a ribonucleoside 5'-phosphate + H2O = a ribonucleoside + phosphate. Its function is as follows. Nucleotidase that shows phosphatase activity on nucleoside 5'-monophosphates. The polypeptide is 5'-nucleotidase SurE (Methanococcus vannielii (strain ATCC 35089 / DSM 1224 / JCM 13029 / OCM 148 / SB)).